A 182-amino-acid polypeptide reads, in one-letter code: Thioredoxin F-type, chloroplastic (182 aa).

The segment at 1 to 22 (MPLSLRLAPSPTALSPTTGGFS) is disordered. Residues 52-177 (KRGDSSVVRC…LVAAIETARS (126 aa)) form the Thioredoxin domain. Active-site nucleophile residues include Cys102 and Cys105. A disulfide bridge links Cys102 with Cys105.

The protein belongs to the thioredoxin family. Plant F-type subfamily. In terms of assembly, forms a complex with heterodimeric ferredoxin-thioredoxin reductase (FTR) and ferredoxin.

The protein localises to the plastid. Its subcellular location is the chloroplast. Its function is as follows. Participates in various redox reactions through the reversible oxidation of the active center dithiol to a disulfide. The F form is known to activate a number of enzymes of the photosynthetic carbon cycle. The sequence is that of Thioredoxin F-type, chloroplastic (TRXF) from Brassica napus (Rape).